A 169-amino-acid polypeptide reads, in one-letter code: Superoxide dismutase [Cu-Zn] 1 (169 aa).

Positions 1–18 are cleaved as a signal peptide; it reads MFEQWDALCAVLFSFSIA. Cu cation-binding residues include His-65, His-67, and His-83. Cys-72 and Cys-165 are disulfide-bonded. 4 residues coordinate Zn(2+): His-83, His-91, His-100, and Asp-103. His-145 is a binding site for Cu cation.

The protein belongs to the Cu-Zn superoxide dismutase family. It depends on Cu cation as a cofactor. Zn(2+) is required as a cofactor.

The catalysed reaction is 2 superoxide + 2 H(+) = H2O2 + O2. In terms of biological role, destroys radicals which are normally produced within the cells and which are toxic to biological systems. This Aquifex aeolicus (strain VF5) protein is Superoxide dismutase [Cu-Zn] 1 (sodC1).